Here is a 186-residue protein sequence, read N- to C-terminus: Large ribosomal subunit protein uL10 (186 aa).

It belongs to the universal ribosomal protein uL10 family. In terms of assembly, part of the ribosomal stalk of the 50S ribosomal subunit. The N-terminus interacts with L11 and the large rRNA to form the base of the stalk. The C-terminus forms an elongated spine to which L12 dimers bind in a sequential fashion forming a multimeric L10(L12)X complex.

Functionally, forms part of the ribosomal stalk, playing a central role in the interaction of the ribosome with GTP-bound translation factors. This chain is Large ribosomal subunit protein uL10, found in Rhodococcus jostii (strain RHA1).